Here is a 406-residue protein sequence, read N- to C-terminus: Ribonuclease D (406 aa).

The 3'-5' exonuclease domain occupies 26 to 193 (LITQTTDLEI…VYLLLKKQLE (168 aa)). The HRDC domain occupies 231–312 (KPRELAVLQK…HEGLEVDLAT (82 aa)).

The protein belongs to the RNase D family. A divalent metal cation is required as a cofactor.

Its subcellular location is the cytoplasm. The enzyme catalyses Exonucleolytic cleavage that removes extra residues from the 3'-terminus of tRNA to produce 5'-mononucleotides.. Functionally, exonuclease involved in the 3' processing of various precursor tRNAs. Initiates hydrolysis at the 3'-terminus of an RNA molecule and releases 5'-mononucleotides. The sequence is that of Ribonuclease D from Bartonella henselae (strain ATCC 49882 / DSM 28221 / CCUG 30454 / Houston 1) (Rochalimaea henselae).